The following is a 511-amino-acid chain: Bifunctional purine biosynthesis protein PurH (511 aa).

The MGS-like domain maps to 1–146; that stretch reads MARLALLSVS…KNFAHTTVLT (146 aa).

This sequence belongs to the PurH family.

The enzyme catalyses (6R)-10-formyltetrahydrofolate + 5-amino-1-(5-phospho-beta-D-ribosyl)imidazole-4-carboxamide = 5-formamido-1-(5-phospho-D-ribosyl)imidazole-4-carboxamide + (6S)-5,6,7,8-tetrahydrofolate. It catalyses the reaction IMP + H2O = 5-formamido-1-(5-phospho-D-ribosyl)imidazole-4-carboxamide. It functions in the pathway purine metabolism; IMP biosynthesis via de novo pathway; 5-formamido-1-(5-phospho-D-ribosyl)imidazole-4-carboxamide from 5-amino-1-(5-phospho-D-ribosyl)imidazole-4-carboxamide (10-formyl THF route): step 1/1. Its pathway is purine metabolism; IMP biosynthesis via de novo pathway; IMP from 5-formamido-1-(5-phospho-D-ribosyl)imidazole-4-carboxamide: step 1/1. In Synechocystis sp. (strain ATCC 27184 / PCC 6803 / Kazusa), this protein is Bifunctional purine biosynthesis protein PurH.